The chain runs to 119 residues: Large ribosomal subunit protein uL24 (119 aa).

It belongs to the universal ribosomal protein uL24 family. Part of the 50S ribosomal subunit.

Its function is as follows. One of two assembly initiator proteins, it binds directly to the 5'-end of the 23S rRNA, where it nucleates assembly of the 50S subunit. Functionally, one of the proteins that surrounds the polypeptide exit tunnel on the outside of the subunit. This is Large ribosomal subunit protein uL24 from Sulfurihydrogenibium sp. (strain YO3AOP1).